The following is a 352-amino-acid chain: Probable dual-specificity RNA methyltransferase RlmN (352 aa).

The active-site Proton acceptor is the glutamate 93. One can recognise a Radical SAM core domain in the interval 99–332 (TAKRLTVCVS…ATVRQTRGLD (234 aa)). The cysteines at positions 106 and 337 are disulfide-linked. [4Fe-4S] cluster contacts are provided by cysteine 113, cysteine 117, and cysteine 120. S-adenosyl-L-methionine is bound by residues 160-161 (GE), serine 190, 213-215 (SLH), and asparagine 294. Cysteine 337 serves as the catalytic S-methylcysteine intermediate.

It belongs to the radical SAM superfamily. RlmN family. Requires [4Fe-4S] cluster as cofactor.

The protein localises to the cytoplasm. It catalyses the reaction adenosine(2503) in 23S rRNA + 2 reduced [2Fe-2S]-[ferredoxin] + 2 S-adenosyl-L-methionine = 2-methyladenosine(2503) in 23S rRNA + 5'-deoxyadenosine + L-methionine + 2 oxidized [2Fe-2S]-[ferredoxin] + S-adenosyl-L-homocysteine. The catalysed reaction is adenosine(37) in tRNA + 2 reduced [2Fe-2S]-[ferredoxin] + 2 S-adenosyl-L-methionine = 2-methyladenosine(37) in tRNA + 5'-deoxyadenosine + L-methionine + 2 oxidized [2Fe-2S]-[ferredoxin] + S-adenosyl-L-homocysteine. Its function is as follows. Specifically methylates position 2 of adenine 2503 in 23S rRNA and position 2 of adenine 37 in tRNAs. The protein is Probable dual-specificity RNA methyltransferase RlmN of Synechococcus sp. (strain JA-2-3B'a(2-13)) (Cyanobacteria bacterium Yellowstone B-Prime).